Reading from the N-terminus, the 372-residue chain is Delta-type opioid receptor (372 aa).

Over Met-1–Ala-47 the chain is Extracellular. 2 N-linked (GlcNAc...) asparagine glycosylation sites follow: Asn-18 and Asn-33. The chain crosses the membrane as a helical span at residues Leu-48–Val-75. Residues Arg-76–Asn-85 are Cytoplasmic-facing. Residues Ile-86 to Leu-110 traverse the membrane as a helical segment. Residues Met-111–Lys-122 lie on the Extracellular side of the membrane. Cys-121 and Cys-198 form a disulfide bridge. Residues Ala-123 to Val-144 traverse the membrane as a helical segment. Over Asp-145 to Ala-163 the chain is Cytoplasmic. A helical transmembrane segment spans residues Lys-164 to Met-186. Residues Ala-187 to Ser-206 lie on the Extracellular side of the membrane. A helical membrane pass occupies residues Trp-207–Leu-238. Residues Arg-239–Arg-261 are Cytoplasmic-facing. Residues Met-262–Trp-284 form a helical membrane-spanning segment. Residues Thr-285 to Ala-299 lie on the Extracellular side of the membrane. The chain crosses the membrane as a helical span at residues Leu-300–Leu-321. Residues Asp-322–Ala-372 are Cytoplasmic-facing. Cys-333 carries S-palmitoyl cysteine lipidation. The disordered stretch occupies residues Gln-340 to Ala-372.

It belongs to the G-protein coupled receptor 1 family. As to quaternary structure, may form homooligomers. Forms a heterodimer with OPRM1. Interacts with GPRASP1. Interacts with RTP4; the interaction promotes cell surface localization of the OPRD1-OPRM1 heterodimer. Ubiquitinated. A basal ubiquitination seems not to be related to degradation. Ubiquitination is increased upon formation of OPRM1:OPRD1 oligomers leading to proteasomal degradation; the ubiquitination is diminished by RTP4. In terms of tissue distribution, detected in brain, brain stem and brain cortex.

It localises to the cell membrane. In terms of biological role, G-protein coupled receptor that functions as a receptor for endogenous enkephalins and for a subset of other opioids. Ligand binding causes a conformation change that triggers signaling via guanine nucleotide-binding proteins (G proteins) and modulates the activity of down-stream effectors, such as adenylate cyclase. Signaling leads to the inhibition of adenylate cyclase activity. Inhibits neurotransmitter release by reducing calcium ion currents and increasing potassium ion conductance. Plays a role in the perception of pain and in opiate-mediated analgesia. Plays a role in developing analgesic tolerance to morphine. This Rattus norvegicus (Rat) protein is Delta-type opioid receptor (Oprd1).